A 262-amino-acid polypeptide reads, in one-letter code: Undecaprenyl-diphosphatase (262 aa).

A run of 8 helical transmembrane segments spans residues 15 to 35 (LTEWLPISSSGHLVLLQIILL), 38 to 58 (SSAAFIALVHAGTLLAVIVAF), 91 to 111 (LYILIGTVPVAVLGLALAKYV), 114 to 134 (IFGSSKIVGVGLLITAALLYS), 149 to 169 (ALIVGLAQSIAIFPGISRSGA), 189 to 209 (FLLSIPALTGFLILELIVSPA), 219 to 239 (VGLLSSFITGLIAIKFLLSII), and 242 to 262 (GRLHLFSYYCVIVGIAILSLL).

Belongs to the UppP family.

It localises to the cell membrane. It catalyses the reaction di-trans,octa-cis-undecaprenyl diphosphate + H2O = di-trans,octa-cis-undecaprenyl phosphate + phosphate + H(+). Its function is as follows. Catalyzes the dephosphorylation of undecaprenyl diphosphate (UPP). The chain is Undecaprenyl-diphosphatase from Korarchaeum cryptofilum (strain OPF8).